The sequence spans 202 residues: Virulence protein F (202 aa).

The span at 1–15 shows a compositional bias: polar residues; sequence MRNSSLRDASGSNDA. Residues 1-21 form a disordered region; the sequence is MRNSSLRDASGSNDAQVPHKT. The region spanning 20 to 42 is the F-box domain; sequence KTELLNLPDHVLTEVAKRLATNN.

In terms of assembly, component of SCF(virF) E3 ubiquitin ligase complexes. Interacts with host VIP1 and SKP1A. Interacts with Arabidopsis thaliana ENAP1/VFP3 and VFP5 in the host cell nucleus.

The protein resides in the host nucleus. In terms of biological role, in the host plant, component of SCF(virF) E3 ubiquitin ligase complexes, which mediate the ubiquitination and subsequent proteasomal degradation of target proteins such as the host VIP1, after its implication in T-DNA translocation to the host nucleus. Required for the formation of tumors of a wild-type size on certain plant species only. The chain is Virulence protein F from Agrobacterium tumefaciens (strain 15955).